The primary structure comprises 390 residues: Protein shisa-9 (390 aa).

The first 22 residues, Met1 to Ala22, serve as a signal peptide directing secretion. At Gln23–Lys134 the chain is on the extracellular side. N-linked (GlcNAc...) asparagine glycosylation is found at Asn40 and Asn74. Residues Thr135–Phe155 traverse the membrane as a helical segment. At Thr156–Val390 the chain is on the cytoplasmic side.

The protein belongs to the shisa family. SHISA9 subfamily. In terms of assembly, component of some AMPA receptors (ionotropic glutamate receptors) complex.

The protein localises to the cell projection. The protein resides in the dendritic spine membrane. It is found in the synapse. In terms of biological role, regulator of short-term neuronal synaptic plasticity in the dentate gyrus. Associates with AMPA receptors (ionotropic glutamate receptors) in synaptic spines and promotes AMPA receptor desensitization at excitatory synapses. This chain is Protein shisa-9 (shisa9), found in Xenopus tropicalis (Western clawed frog).